Here is a 317-residue protein sequence, read N- to C-terminus: Adenine deaminase (317 aa).

3 residues coordinate Zn(2+): His14, His16, and His194. Catalysis depends on Glu197, which acts as the Proton donor. A Zn(2+)-binding site is contributed by Asp275. Residue Asp276 participates in substrate binding.

This sequence belongs to the metallo-dependent hydrolases superfamily. Adenosine and AMP deaminases family. Adenine deaminase type 2 subfamily. Zn(2+) serves as cofactor.

The catalysed reaction is adenine + H2O + H(+) = hypoxanthine + NH4(+). In terms of biological role, catalyzes the hydrolytic deamination of adenine to hypoxanthine. Plays an important role in the purine salvage pathway and in nitrogen catabolism. This chain is Adenine deaminase, found in Pseudomonas fluorescens (strain Pf0-1).